A 127-amino-acid chain; its full sequence is Fluoride-specific ion channel FluC (127 aa).

4 consecutive transmembrane segments (helical) span residues 4–24, 35–55, 71–91, and 101–121; these read LLCA…WLGM, IGTL…LAWF, TGFC…VFLL, and LNVM…FWLF. Na(+)-binding residues include G75 and T78.

It belongs to the fluoride channel Fluc/FEX (TC 1.A.43) family.

The protein resides in the cell inner membrane. The catalysed reaction is fluoride(in) = fluoride(out). Na(+) is not transported, but it plays an essential structural role and its presence is essential for fluoride channel function. Functionally, fluoride-specific ion channel. Important for reducing fluoride concentration in the cell, thus reducing its toxicity. This Klebsiella pneumoniae (strain 342) protein is Fluoride-specific ion channel FluC.